The primary structure comprises 278 residues: MLFKFEGDKIKIITAPRKFITINLVVSDYQKKFIEEWKNGNFKIGEVIIKKDSIIIPFKKVVNPKNFEHIMTIDINEKNITYSIFDKDGNVIKTTRLDVYKLKRIHENFSKKREKIQKKLSNKPMKLKTLMEKYSGREKRKVEDYLHKISKFLISEALKYNVKILMEDLTNIREAVNKKSKNFRRRLNRWNFSKLQFFIEYKAKWDGLDVEYVNPSRTSKLCPICGCKLDPNGQRLLKCNNCNLVFDRDVVATFNLFKKSQDVGSFRSPERSLMKSSY.

Zn(2+)-binding residues include Cys222, Cys225, Cys239, and Cys242.

It in the N-terminal section; belongs to the transposase 2 family. This sequence in the C-terminal section; belongs to the transposase 35 family.

The chain is TnpB-like protein MJ0751 from Methanocaldococcus jannaschii (strain ATCC 43067 / DSM 2661 / JAL-1 / JCM 10045 / NBRC 100440) (Methanococcus jannaschii).